The sequence spans 507 residues: Histidine ammonia-lyase (507 aa).

Residues 141–143 (ASG) constitute a cross-link (5-imidazolinone (Ala-Gly)). At Ser-142 the chain carries 2,3-didehydroalanine (Ser).

It belongs to the PAL/histidase family. In terms of processing, contains an active site 4-methylidene-imidazol-5-one (MIO), which is formed autocatalytically by cyclization and dehydration of residues Ala-Ser-Gly.

It localises to the cytoplasm. It catalyses the reaction L-histidine = trans-urocanate + NH4(+). Its pathway is amino-acid degradation; L-histidine degradation into L-glutamate; N-formimidoyl-L-glutamate from L-histidine: step 1/3. This Burkholderia cenocepacia (strain ATCC BAA-245 / DSM 16553 / LMG 16656 / NCTC 13227 / J2315 / CF5610) (Burkholderia cepacia (strain J2315)) protein is Histidine ammonia-lyase.